The chain runs to 142 residues: MKTFVAKPETVKRDWYVVDATGKTLGRLATELARRLRGKHKAEYTPHVDTGDYIIVINAEKVAVTGKKETDKIYYWHTGYVGGIKDATFKEMIARRPEAVIEIAVKGMLPKGPLGRAMFRKLKVYAGNEHNHAAQQPQVLDI.

The protein belongs to the universal ribosomal protein uL13 family. As to quaternary structure, part of the 50S ribosomal subunit.

In terms of biological role, this protein is one of the early assembly proteins of the 50S ribosomal subunit, although it is not seen to bind rRNA by itself. It is important during the early stages of 50S assembly. The protein is Large ribosomal subunit protein uL13 of Glaesserella parasuis serovar 5 (strain SH0165) (Haemophilus parasuis).